The primary structure comprises 150 residues: Calmodulin-like protein 7 (150 aa).

4 consecutive EF-hand domains span residues 1-36 (MDPT…LGIY), 37-72 (IPDK…IMDE), 75-110 (EEEE…LGLK), and 113-148 (KTLD…GGFN). 19 residues coordinate Ca(2+): Asp-14, Asn-16, Asp-18, Thr-20, Glu-25, Asp-50, Asn-52, Asp-54, Cys-56, Glu-61, Asp-88, Asn-90, Asp-92, Glu-99, Asp-126, Asp-128, Asp-130, Arg-132, and Glu-137.

It belongs to the calmodulin family.

In terms of biological role, potential calcium sensor. This chain is Calmodulin-like protein 7 (CML7), found in Arabidopsis thaliana (Mouse-ear cress).